The primary structure comprises 73 residues: FANLVEKTTYFSDKGEFEGFVAMVNKNVTLGNVIPASYKLQVYKTYDATHEGLIQSFVENGTEEVPLDGXEXX.

This sequence belongs to the peptidase M49 family. The cofactor is Zn(2+).

It is found in the membrane. The enzyme catalyses Release of an N-terminal dipeptide from a peptide comprising four or more residues, with broad specificity. Also acts on dipeptidyl 2-naphthylamides.. In terms of biological role, degrades neuropeptide proctolin (RYLPT) by cleavage between Tyr and Leu residues. The sequence is that of Dipeptidyl peptidase 3 from Blaberus craniifer (Death's head cockroach).